The chain runs to 242 residues: uncharacterized protein (242 aa).

Residues 57-67 (SPTSQKTSASG) are compositionally biased toward polar residues. A disordered region spans residues 57 to 78 (SPTSQKTSASGQEEPDPLHDKS). In terms of domain architecture, DUF1279 spans 76–188 (DKSSGLIQRF…GYMSTPPPVK (113 aa)). Residues 92-114 (YGKVMIPVHLLTSTMWFGTFYYA) traverse the membrane as a helical segment. A coiled-coil region spans residues 188–237 (KEYLQEKMEETKERISGKMEETKDRFSERMEETKDKFNEKLQETKDKVSF). Positions 198-236 (TKERISGKMEETKDRFSERMEETKDKFNEKLQETKDKVS) are enriched in basic and acidic residues. The tract at residues 198 to 242 (TKERISGKMEETKDRFSERMEETKDKFNEKLQETKDKVSFRKKKE) is disordered.

It is found in the membrane. This is an uncharacterized protein from Danio rerio (Zebrafish).